Here is a 430-residue protein sequence, read N- to C-terminus: Purine nucleoside phosphorylase LACC1 (430 aa).

Lys247 carries the N6-acetyllysine modification. Zn(2+) contacts are provided by His250, Cys284, and His301.

It belongs to the purine nucleoside phosphorylase YfiH/LACC1 family. As to quaternary structure, interacts with FASN. Interacts with SDHA. Interacts with ATF6, EIF2AK3 and ERN1. In terms of processing, phosphorylated on tyrosine residues. As to expression, predominantly expressed in myeloid cells. Highly expressed in primary macrophages and dendritic cells sorted from the peritoneum or spleen, respectively (at protein level).

The protein localises to the cytoplasm. It localises to the nucleus. It is found in the endoplasmic reticulum. The protein resides in the peroxisome. The catalysed reaction is adenosine + phosphate = alpha-D-ribose 1-phosphate + adenine. It carries out the reaction inosine + phosphate = alpha-D-ribose 1-phosphate + hypoxanthine. It catalyses the reaction guanosine + phosphate = alpha-D-ribose 1-phosphate + guanine. The enzyme catalyses S-methyl-5'-thioadenosine + phosphate = 5-(methylsulfanyl)-alpha-D-ribose 1-phosphate + adenine. The catalysed reaction is adenosine + H2O + H(+) = inosine + NH4(+). Purine nucleoside enzyme that catalyzes the phosphorolysis of adenosine, guanosine and inosine nucleosides, yielding D-ribose 1-phosphate and the respective free bases, adenine, guanine and hypoxanthine. Also catalyzes the phosphorolysis of S-methyl-5'-thioadenosine into adenine and S-methyl-5-thio-alpha-D-ribose 1-phosphate. Also has adenosine deaminase activity. Acts as a regulator of innate immunity in macrophages by modulating the purine nucleotide metabolism, thereby regulating the metabolic function and bioenergetic state of macrophages. Enables a purine nucleotide cycle between adenosine and inosine monophosphate and adenylosuccinate that prevents cytoplasmic acidification and balances the cytoplasmic-mitochondrial redox interface. The purine nucleotide cycle consumes aspartate and releases fumarate in a manner involving fatty acid oxidation and ATP-citrate lyase activity. Participates in pattern recognition receptor-induced cytokines in macrophages: associates with the NOD2-signaling complex and promotes optimal NOD2-induced signaling, cytokine secretion and bacterial clearance. Localizes to the endoplasmic reticulum upon PRR stimulation of macrophages and associates with endoplasmic reticulum-stress sensors, promoting the endoplasmic reticulum unfolded protein response (UPR). Does not show laccase activity. This chain is Purine nucleoside phosphorylase LACC1, found in Mus musculus (Mouse).